Reading from the N-terminus, the 814-residue chain is MAAPEAWRARSCWFCEVAAATTMEATSREAAPAKSSASGPSAPPALFELCGRAVSAHMGVLESGVWALPGPILQSILPLLNIYYLERIEETALKKGLSTQAIWRRLWDELMKTRPSSLESVTCWRAKFMEAFFSHVLRGTIDVSSDRRLCDQRFSPLLHSSRHVRQLTICNMLQGATELVAEPNRRVLETLASSLHTLKFRHLLFSDVAAQQSLRQLLHQLIHHGAVSQVSLYSWPVPESALFILILTMSAGFWQPGPGGPPCRLCGEASRGRAPSRDEGSLLLGSRRPRRDAAERCAAALMASRRKSEAKQTARAAPATRVTRRSTQESLTAGGTDSKREPLPPATSHEAPGTKRPPSAPATTSSASASSSTSSSKRAPASSAPQPKPLKRFKRAAGKKGARTRQGCGAESEDLYDFVFIVAGEKEDGEEMEIGEVACGALDGSDPSCLGLPALEASQRFRSISTLELFTVPLSTEAALTLCHLLSSWVSLESLTLSYNGLGSNIFRLLDSLRALSVQAGCRLRALHLSDLFSPLPILELTRAIVRALPLLRVLSIRVDHPSQRDNPAVPGNAGPPSNVIGDEEIPENCLEQLEMGFPRGAQPAPLLCSVLKASGSLQQLSLDSATFASPQDFGLVLQTLKEYNLTLKRLSFHDMNLADCQSEVLFLLQNLTLQEITFSFCRLFEKRPAQFLPEMVAAMKGNSTLKGLRLPGNRLGNAGLLALADVFSEDSSSSLCQLDISSNCIKPDGLLEFAKRLERWGRGAFGHLRLFQNWLDQDAVTAREAIRRLRATCHVVSDSWDSSQAFADYVSTM.

The segment at 45–54 is interaction with Elongin BC complex; that stretch reads ALFELCGRAV. Phosphoserine occurs at positions 155, 276, and 326. Residues 265-408 form a disordered region; the sequence is LCGEASRGRA…KKGARTRQGC (144 aa). Position 327 is a phosphothreonine (threonine 327). Residues 354-385 show a composition bias toward low complexity; sequence TKRPPSAPATTSSASASSSTSSSKRAPASSAP. Serine 375 is subject to Phosphoserine. The span at 389 to 403 shows a compositional bias: basic residues; the sequence is PLKRFKRAAGKKGAR. 7 LRR repeats span residues 489–509, 520–532, 533–557, 615–637, 638–661, 703–730, and 733–754; these read WVSL…IFRL, AGCR…LSDL, FSPL…VLSI, SGSL…FGLV, LQTL…LADC, NSTL…VFSE, and SSSL…LLEF.

In terms of assembly, part of a E3 ubiquitin ligase complex with elongin BC complex (ELOB and ELOC), RBX1 and CUL5.

This chain is Leucine-rich repeat-containing protein 41 (LRRC41), found in Bos taurus (Bovine).